The primary structure comprises 447 residues: Argininosuccinate synthase (447 aa).

ATP is bound by residues Ala-17 to Ser-25 and Ala-43. Tyr-99 lines the L-citrulline pocket. Residues Gly-129 and Thr-131 each contribute to the ATP site. 3 residues coordinate L-aspartate: Thr-131, Asn-135, and Asp-136. Asn-135 serves as a coordination point for L-citrulline. Asp-136 serves as a coordination point for ATP. L-citrulline is bound by residues Arg-139 and Ser-192. Asp-194 provides a ligand contact to ATP. L-citrulline contacts are provided by Thr-201, Glu-203, and Glu-280.

It belongs to the argininosuccinate synthase family. Type 2 subfamily. Homotetramer.

The protein localises to the cytoplasm. The enzyme catalyses L-citrulline + L-aspartate + ATP = 2-(N(omega)-L-arginino)succinate + AMP + diphosphate + H(+). Its pathway is amino-acid biosynthesis; L-arginine biosynthesis; L-arginine from L-ornithine and carbamoyl phosphate: step 2/3. This Salmonella paratyphi B (strain ATCC BAA-1250 / SPB7) protein is Argininosuccinate synthase.